The chain runs to 338 residues: H(2)-forming methylenetetrahydromethanopterin dehydrogenase-related protein MJ0715 (338 aa).

The protein belongs to the HMD family.

The protein is H(2)-forming methylenetetrahydromethanopterin dehydrogenase-related protein MJ0715 of Methanocaldococcus jannaschii (strain ATCC 43067 / DSM 2661 / JAL-1 / JCM 10045 / NBRC 100440) (Methanococcus jannaschii).